The primary structure comprises 267 residues: MTLETQMFQNAHSGSQWLLPPLTMLLLFAFADRQTANLPKAVVKRDPPWIQVLKEDTVTLTCEGTHNPGNSSTQWFHNQSSTWGQVQASYTFKATVNDSGEYRCRMAHTSLSDPVHLEVISDWLLLQTPQLVFEEGETITLRCHSWKNKQLTKVLLFQNGKPVRYYYQSSNFSIPKANHSHSGNYYCKAYLGRTMHVSKPVTITVQGSATASTSSLVWFHAAFCLVMCLLFAVDTGLYFCVRRNLQTSGEDWRKSLSVGKYKAPQDK.

An N-terminal signal peptide occupies residues 1–36 (MTLETQMFQNAHSGSQWLLPPLTMLLLFAFADRQTA). The Extracellular portion of the chain corresponds to 37 to 221 (NLPKAVVKRD…STSSLVWFHA (185 aa)). Ig-like C2-type domains lie at 39-121 (PKAV…EVIS) and 122-204 (DWLL…VTIT). Disulfide bonds link C62/C104 and C143/C187. N-linked (GlcNAc...) asparagine glycosylation is found at N70, N78, N97, N171, and N178. A helical membrane pass occupies residues 222-241 (AFCLVMCLLFAVDTGLYFCV). Over 242–267 (RRNLQTSGEDWRKSLSVGKYKAPQDK) the chain is Cytoplasmic.

In terms of assembly, may form multisubunit complex with other heteroproteins. This association is required for efficient cell-surface expression. Does not associate with CD3 zeta. As to expression, expressed on natural killer cells and macrophages.

The protein localises to the cell membrane. Its function is as follows. Receptor for the Fc region of complexed immunoglobulins gamma. Low affinity receptor which binds to IgG1, IgG2a and IgG2b. Mediates neutrophil activation by IgG complexes redundantly with Fcgr4. In Rattus norvegicus (Rat), this protein is Low affinity immunoglobulin gamma Fc region receptor III (Fcgr3).